A 468-amino-acid chain; its full sequence is ATP synthase subunit beta (468 aa).

Gly155–Thr162 contacts ATP.

Belongs to the ATPase alpha/beta chains family. As to quaternary structure, F-type ATPases have 2 components, CF(1) - the catalytic core - and CF(0) - the membrane proton channel. CF(1) has five subunits: alpha(3), beta(3), gamma(1), delta(1), epsilon(1). CF(0) has three main subunits: a(1), b(2) and c(9-12). The alpha and beta chains form an alternating ring which encloses part of the gamma chain. CF(1) is attached to CF(0) by a central stalk formed by the gamma and epsilon chains, while a peripheral stalk is formed by the delta and b chains.

The protein resides in the cell membrane. The catalysed reaction is ATP + H2O + 4 H(+)(in) = ADP + phosphate + 5 H(+)(out). Functionally, produces ATP from ADP in the presence of a proton gradient across the membrane. The catalytic sites are hosted primarily by the beta subunits. This chain is ATP synthase subunit beta, found in Streptococcus agalactiae serotype Ia (strain ATCC 27591 / A909 / CDC SS700).